Here is a 206-residue protein sequence, read N- to C-terminus: Urease accessory protein UreG (206 aa).

13–20 (GPVGSGKT) serves as a coordination point for GTP.

Belongs to the SIMIBI class G3E GTPase family. UreG subfamily. As to quaternary structure, homodimer. UreD, UreF and UreG form a complex that acts as a GTP-hydrolysis-dependent molecular chaperone, activating the urease apoprotein by helping to assemble the nickel containing metallocenter of UreC. The UreE protein probably delivers the nickel.

It is found in the cytoplasm. Functionally, facilitates the functional incorporation of the urease nickel metallocenter. This process requires GTP hydrolysis, probably effectuated by UreG. This is Urease accessory protein UreG from Natronomonas pharaonis (strain ATCC 35678 / DSM 2160 / CIP 103997 / JCM 8858 / NBRC 14720 / NCIMB 2260 / Gabara) (Halobacterium pharaonis).